Reading from the N-terminus, the 365-residue chain is MIIATTEIQAINSFSRSESLSLKEVYGLIWLLVPIFTLILVIIIGVLVIVWLEREISAGIQQRIGPEYAGPLGILQALADGTKLLFKEDLLPSRGDISLFSLGPSIAVISTLLSYLVIPFGYHLVLADLSIGVFLWIAISSIAPIGLLMSGYGSNNKYSFSGGLRAAAQSISYEIPLTLCVLSISLLSNSSSTVDIVEAQSKYGFWGWNLWRQPIGFLVFLVSSLAECERLPFDLPEAEEELVAGYQTEYSGIKFGLFYVASYLNLLVSSLFVTVLYLGGWNLSIPYIFIPELFGKNKTGGIFGMTIGILITLAKAYLFLFISIATRWTLPRLRIDQLLNLGWKFLLPISLGNLLLTTSSQLVSL.

6 helical membrane passes run 29–49 (IWLL…VLVI), 106–126 (IAVI…HLVL), 129–149 (LSIG…GLLM), 250–270 (YSGI…LVSS), 302–322 (IFGM…FLFI), and 338–358 (LLNL…LLTT).

It belongs to the complex I subunit 1 family. NDH is composed of at least 16 different subunits, 5 of which are encoded in the nucleus.

The protein localises to the plastid. It is found in the chloroplast thylakoid membrane. The catalysed reaction is a plastoquinone + NADH + (n+1) H(+)(in) = a plastoquinol + NAD(+) + n H(+)(out). The enzyme catalyses a plastoquinone + NADPH + (n+1) H(+)(in) = a plastoquinol + NADP(+) + n H(+)(out). Functionally, NDH shuttles electrons from NAD(P)H:plastoquinone, via FMN and iron-sulfur (Fe-S) centers, to quinones in the photosynthetic chain and possibly in a chloroplast respiratory chain. The immediate electron acceptor for the enzyme in this species is believed to be plastoquinone. Couples the redox reaction to proton translocation, and thus conserves the redox energy in a proton gradient. This Acorus calamus (Sweet flag) protein is NAD(P)H-quinone oxidoreductase subunit 1, chloroplastic.